A 109-amino-acid chain; its full sequence is V-type proton ATPase 16 kDa proteolipid subunit (109 aa).

A helical membrane pass occupies residues 1 to 20; it reads VPVVMAGVLGIYGLIIAVII. Over 21 to 39 the chain is Lumenal; the sequence is STGINPKAKPYYLFDGYAH. Residues 40 to 61 traverse the membrane as a helical segment; the sequence is LSSGLACGLAGLAAGMAIGIVG. Topologically, residues 62–73 are cytoplasmic; it reads DAGVRANAQQPK. Residues 74-99 traverse the membrane as a helical segment; it reads LFVGMILILIFAEALALYGLIVGIIL. Over 100–109 the chain is Lumenal; it reads SSRAGQSRAD.

It belongs to the V-ATPase proteolipid subunit family. As to quaternary structure, V-ATPase is a heteromultimeric enzyme composed of a peripheral catalytic V1 complex (main components: subunits A, B, C, D, E, and F) attached to an integral membrane V0 proton pore complex (main component: the proteolipid protein; which is present as a hexamer that forms the proton-conducting pore). High expression in the mesocotyl tip of etiolated seedlings compared to the base.

Its subcellular location is the vacuole membrane. In terms of biological role, proton-conducting pore forming subunit of the membrane integral V0 complex of vacuolar ATPase. V-ATPase is responsible for acidifying a variety of intracellular compartments in eukaryotic cells. The protein is V-type proton ATPase 16 kDa proteolipid subunit of Zea mays (Maize).